A 75-amino-acid chain; its full sequence is Exodeoxyribonuclease 7 small subunit (75 aa).

Belongs to the XseB family. As to quaternary structure, heterooligomer composed of large and small subunits.

Its subcellular location is the cytoplasm. The catalysed reaction is Exonucleolytic cleavage in either 5'- to 3'- or 3'- to 5'-direction to yield nucleoside 5'-phosphates.. Functionally, bidirectionally degrades single-stranded DNA into large acid-insoluble oligonucleotides, which are then degraded further into small acid-soluble oligonucleotides. This Clostridium perfringens (strain ATCC 13124 / DSM 756 / JCM 1290 / NCIMB 6125 / NCTC 8237 / Type A) protein is Exodeoxyribonuclease 7 small subunit.